We begin with the raw amino-acid sequence, 376 residues long: Protein-tyrosine sulfotransferase 2 (376 aa).

Over methionine 1–valine 8 the chain is Cytoplasmic. The helical; Signal-anchor for type II membrane protein transmembrane segment at leucine 9–glycine 25 threads the bilayer. The Lumenal segment spans residues glutamine 26–serine 376. Position 77–81 (arginine 77–threonine 81) interacts with 3'-phosphoadenylyl sulfate. A disulfide bond links cysteine 95 and cysteine 155. Glutamate 98 (proton donor/acceptor) is an active-site residue. Residues arginine 100–arginine 104 are interaction with peptide substrate. The 3'-phosphoadenylyl sulfate site is built by arginine 182, serine 190, and arginine 194. A disulfide bridge links cysteine 224 with cysteine 232. 3'-phosphoadenylyl sulfate-binding positions include tyrosine 237, serine 284 to asparagine 293, and lysine 299. Residues asparagine 342 and asparagine 367 are each glycosylated (N-linked (GlcNAc...) asparagine).

It belongs to the protein sulfotransferase family. In terms of assembly, homodimer. Can also form heterodimers with TPST1. Post-translationally, N-glycosylated. Widely expressed.

The protein resides in the golgi apparatus membrane. It catalyses the reaction L-tyrosyl-[protein] + 3'-phosphoadenylyl sulfate = O-sulfo-L-tyrosine-[protein] + adenosine 3',5'-bisphosphate + H(+). In terms of biological role, catalyzes the O-sulfation of tyrosine residues within acidic motifs of polypeptides, using 3'-phosphoadenylyl sulfate (PAPS) as cosubstrate. The chain is Protein-tyrosine sulfotransferase 2 (Tpst2) from Mus musculus (Mouse).